The primary structure comprises 78 residues: Putative membrane protein insertion efficiency factor (78 aa).

Belongs to the UPF0161 family.

The protein localises to the cell inner membrane. In terms of biological role, could be involved in insertion of integral membrane proteins into the membrane. The polypeptide is Putative membrane protein insertion efficiency factor (Prochlorococcus marinus (strain MIT 9301)).